A 357-amino-acid polypeptide reads, in one-letter code: 3-dehydroquinate synthase (357 aa).

NAD(+)-binding positions include 69–74 (DGEQFK), 103–107 (GVVGD), 127–128 (TT), lysine 140, lysine 149, and 167–170 (CLQT). The Zn(2+) site is built by glutamate 182, histidine 245, and histidine 262.

The protein belongs to the sugar phosphate cyclases superfamily. Dehydroquinate synthase family. Requires Co(2+) as cofactor. It depends on Zn(2+) as a cofactor. NAD(+) is required as a cofactor.

The protein localises to the cytoplasm. The catalysed reaction is 7-phospho-2-dehydro-3-deoxy-D-arabino-heptonate = 3-dehydroquinate + phosphate. It participates in metabolic intermediate biosynthesis; chorismate biosynthesis; chorismate from D-erythrose 4-phosphate and phosphoenolpyruvate: step 2/7. Its function is as follows. Catalyzes the conversion of 3-deoxy-D-arabino-heptulosonate 7-phosphate (DAHP) to dehydroquinate (DHQ). This Idiomarina loihiensis (strain ATCC BAA-735 / DSM 15497 / L2-TR) protein is 3-dehydroquinate synthase.